Consider the following 426-residue polypeptide: Formate-dependent phosphoribosylglycinamide formyltransferase (426 aa).

Residues E26–L27 and E86 each bind N(1)-(5-phospho-beta-D-ribosyl)glycinamide. ATP is bound by residues R118, K158, E197–I200, and E205. In terms of domain architecture, ATP-grasp spans E123–L324. Mg(2+) contacts are provided by E279 and E293. N(1)-(5-phospho-beta-D-ribosyl)glycinamide-binding positions include D300, K374, and R381–R382.

It belongs to the PurK/PurT family. In terms of assembly, homodimer.

The enzyme catalyses N(1)-(5-phospho-beta-D-ribosyl)glycinamide + formate + ATP = N(2)-formyl-N(1)-(5-phospho-beta-D-ribosyl)glycinamide + ADP + phosphate + H(+). It functions in the pathway purine metabolism; IMP biosynthesis via de novo pathway; N(2)-formyl-N(1)-(5-phospho-D-ribosyl)glycinamide from N(1)-(5-phospho-D-ribosyl)glycinamide (formate route): step 1/1. In terms of biological role, involved in the de novo purine biosynthesis. Catalyzes the transfer of formate to 5-phospho-ribosyl-glycinamide (GAR), producing 5-phospho-ribosyl-N-formylglycinamide (FGAR). Formate is provided by PurU via hydrolysis of 10-formyl-tetrahydrofolate. This is Formate-dependent phosphoribosylglycinamide formyltransferase from Methanocella arvoryzae (strain DSM 22066 / NBRC 105507 / MRE50).